The chain runs to 734 residues: Phosphoribosylformylglycinamidine synthase subunit PurL (734 aa).

Residue H49 is part of the active site. 2 residues coordinate ATP: Y52 and K91. E93 provides a ligand contact to Mg(2+). Substrate-binding positions include 94–97 (SHNH) and R116. H95 acts as the Proton acceptor in catalysis. D117 serves as a coordination point for Mg(2+). Position 240 (Q240) interacts with substrate. A Mg(2+)-binding site is contributed by D268. 312-314 (ESQ) serves as a coordination point for substrate. ATP is bound by residues D491 and G528. N529 serves as a coordination point for Mg(2+). Residue S531 participates in substrate binding.

The protein belongs to the FGAMS family. Monomer. Part of the FGAM synthase complex composed of 1 PurL, 1 PurQ and 2 PurS subunits.

It is found in the cytoplasm. It carries out the reaction N(2)-formyl-N(1)-(5-phospho-beta-D-ribosyl)glycinamide + L-glutamine + ATP + H2O = 2-formamido-N(1)-(5-O-phospho-beta-D-ribosyl)acetamidine + L-glutamate + ADP + phosphate + H(+). Its pathway is purine metabolism; IMP biosynthesis via de novo pathway; 5-amino-1-(5-phospho-D-ribosyl)imidazole from N(2)-formyl-N(1)-(5-phospho-D-ribosyl)glycinamide: step 1/2. Its function is as follows. Part of the phosphoribosylformylglycinamidine synthase complex involved in the purines biosynthetic pathway. Catalyzes the ATP-dependent conversion of formylglycinamide ribonucleotide (FGAR) and glutamine to yield formylglycinamidine ribonucleotide (FGAM) and glutamate. The FGAM synthase complex is composed of three subunits. PurQ produces an ammonia molecule by converting glutamine to glutamate. PurL transfers the ammonia molecule to FGAR to form FGAM in an ATP-dependent manner. PurS interacts with PurQ and PurL and is thought to assist in the transfer of the ammonia molecule from PurQ to PurL. This Zymomonas mobilis subsp. mobilis (strain ATCC 31821 / ZM4 / CP4) protein is Phosphoribosylformylglycinamidine synthase subunit PurL.